The following is a 322-amino-acid chain: Methionyl-tRNA formyltransferase (322 aa).

112 to 115 (SLLP) provides a ligand contact to (6S)-5,6,7,8-tetrahydrofolate.

This sequence belongs to the Fmt family.

It carries out the reaction L-methionyl-tRNA(fMet) + (6R)-10-formyltetrahydrofolate = N-formyl-L-methionyl-tRNA(fMet) + (6S)-5,6,7,8-tetrahydrofolate + H(+). In terms of biological role, attaches a formyl group to the free amino group of methionyl-tRNA(fMet). The formyl group appears to play a dual role in the initiator identity of N-formylmethionyl-tRNA by promoting its recognition by IF2 and preventing the misappropriation of this tRNA by the elongation apparatus. The sequence is that of Methionyl-tRNA formyltransferase from Synechococcus sp. (strain JA-3-3Ab) (Cyanobacteria bacterium Yellowstone A-Prime).